Here is a 164-residue protein sequence, read N- to C-terminus: Probable Brix domain-containing ribosomal biogenesis protein (164 aa).

Positions 1–164 constitute a Brix domain; that stretch reads MIITTSRKPS…IKTVKILDIE (164 aa).

In terms of biological role, probably involved in the biogenesis of the ribosome. The polypeptide is Probable Brix domain-containing ribosomal biogenesis protein (Methanococcus maripaludis (strain DSM 14266 / JCM 13030 / NBRC 101832 / S2 / LL)).